The sequence spans 64 residues: Small ribosomal subunit protein eS17 (64 aa).

It belongs to the eukaryotic ribosomal protein eS17 family.

This Natronomonas pharaonis (strain ATCC 35678 / DSM 2160 / CIP 103997 / JCM 8858 / NBRC 14720 / NCIMB 2260 / Gabara) (Halobacterium pharaonis) protein is Small ribosomal subunit protein eS17.